Consider the following 253-residue polypeptide: 3-deoxy-manno-octulosonate cytidylyltransferase (253 aa).

This sequence belongs to the KdsB family.

The protein localises to the cytoplasm. It carries out the reaction 3-deoxy-alpha-D-manno-oct-2-ulosonate + CTP = CMP-3-deoxy-beta-D-manno-octulosonate + diphosphate. Its pathway is nucleotide-sugar biosynthesis; CMP-3-deoxy-D-manno-octulosonate biosynthesis; CMP-3-deoxy-D-manno-octulosonate from 3-deoxy-D-manno-octulosonate and CTP: step 1/1. It participates in bacterial outer membrane biogenesis; lipopolysaccharide biosynthesis. Its function is as follows. Activates KDO (a required 8-carbon sugar) for incorporation into bacterial lipopolysaccharide in Gram-negative bacteria. In Pseudoalteromonas translucida (strain TAC 125), this protein is 3-deoxy-manno-octulosonate cytidylyltransferase.